The chain runs to 256 residues: Ribosomal RNA small subunit methyltransferase A (256 aa).

6 residues coordinate S-adenosyl-L-methionine: Asn-12, Leu-14, Gly-39, Glu-60, Asp-85, and Asn-103.

Belongs to the class I-like SAM-binding methyltransferase superfamily. rRNA adenine N(6)-methyltransferase family. RsmA subfamily.

The protein localises to the cytoplasm. It catalyses the reaction adenosine(1518)/adenosine(1519) in 16S rRNA + 4 S-adenosyl-L-methionine = N(6)-dimethyladenosine(1518)/N(6)-dimethyladenosine(1519) in 16S rRNA + 4 S-adenosyl-L-homocysteine + 4 H(+). Its function is as follows. Specifically dimethylates two adjacent adenosines (A1518 and A1519) in the loop of a conserved hairpin near the 3'-end of 16S rRNA in the 30S particle. May play a critical role in biogenesis of 30S subunits. The sequence is that of Ribosomal RNA small subunit methyltransferase A from Legionella pneumophila (strain Lens).